Reading from the N-terminus, the 187-residue chain is Inner membrane-spanning protein YciB (187 aa).

A run of 5 helical transmembrane segments spans residues 25 to 45 (ATGA…ALYK), 50 to 70 (MQLI…FLHD), 76 to 96 (WKVT…HVMG), 118 to 138 (INWA…YVAY), and 148 to 168 (FKVF…GGYI).

The protein belongs to the YciB family.

Its subcellular location is the cell inner membrane. Functionally, plays a role in cell envelope biogenesis, maintenance of cell envelope integrity and membrane homeostasis. This chain is Inner membrane-spanning protein YciB, found in Vibrio vulnificus (strain CMCP6).